A 352-amino-acid chain; its full sequence is Dysbindin (352 aa).

Residue serine 11 is modified to Phosphoserine. The stretch at 92–180 (TSLAELQEQL…AELDTEHAQK (89 aa)) forms a coiled coil. The Nuclear export signal signature appears at 243-256 (LMDLSDQEALDVFL). The interval 267-352 (SPGLEMESNP…SDQCDSTQDI (86 aa)) is disordered. The segment covering 274-285 (SNPSQNEMNLQI) has biased composition (polar residues). Residues 286-301 (PNPSESASQPPASPSA) are compositionally biased toward low complexity. A phosphoserine mark is found at serine 340 and serine 343.

This sequence belongs to the dysbindin family. In terms of assembly, interacts (via its coiled coil domain) with KXD1. Interacts with AP3B2, TRIM32, CMYA5, PI4K2 and RNF151. Interacts with the DNA-dependent protein kinase complex DNA-PK; the interaction phosphorylates DTNBP1 in vitro. Interacts directly in this complex with XRCC5 and XRCC6. Interacts with XPO1; the interaction exports DTNBP1 out of the nucleus. Component of the biogenesis of lysosome-related organelles complex 1 (BLOC-1) composed of at least BLOC1S1, BLOC1S2, BLOC1S3, BLOC1S4, BLOC1S5, BLOC1S6, DTNBP1/BLOC1S7 and SNAPIN/BLOC1S8. Interacts directly in the complex with BLOC1S5, BLOC1S6 and SNAPIN/BLOC1S8. The BLOC-1 complex associates with the AP-3 protein complex and membrane protein cargos. This BLOC-1 complex also associates with the BLOC-2 complex in endosomes. Binds to DTNA and DTNB but may not be a physiological binding partner. Interacts with AP3M1. Post-translationally, ubiquitinated by TRIM32. Ubiquitination leads to DTNBP1 degradation. In terms of tissue distribution, detected in hippocampus neurons (at protein level). Ubiquitously expressed. The highest expression is observed in testis, liver, kidney, brain, heart and lung. In the brain, found primarily in axon bundles and axon terminals, notably in the cerebellum and hippocampus. Expressed at lower levels in stomach, small intestine and skeletal muscle, where it is detected at the sarcolemma.

The protein localises to the cytoplasm. The protein resides in the cytoplasmic vesicle membrane. It localises to the cytoplasmic vesicle. It is found in the secretory vesicle. Its subcellular location is the synaptic vesicle membrane. The protein localises to the endosome membrane. The protein resides in the melanosome membrane. It localises to the nucleus. It is found in the postsynaptic density. Its subcellular location is the presynaptic cell membrane. The protein localises to the endoplasmic reticulum. Its function is as follows. Component of the BLOC-1 complex, a complex that is required for normal biogenesis of lysosome-related organelles (LRO), such as platelet dense granules and melanosomes. In concert with the AP-3 complex, the BLOC-1 complex is required to target membrane protein cargos into vesicles assembled at cell bodies for delivery into neurites and nerve terminals. The BLOC-1 complex, in association with SNARE proteins, is also proposed to be involved in neurite extension. Associates with the BLOC-2 complex to facilitate the transport of TYRP1 independent of AP-3 function. Plays a role in synaptic vesicle trafficking and in neurotransmitter release. Plays a role in the regulation of cell surface exposure of DRD2. May play a role in actin cytoskeleton reorganization and neurite outgrowth. May modulate MAPK8 phosphorylation. Appears to promote neuronal transmission and viability through regulating the expression of SNAP25 and SYN1, modulating PI3-kinase-Akt signaling and influencing glutamatergic release. Regulates the expression of SYN1 through binding to its promoter. Modulates prefrontal cortical activity via the dopamine/D2 pathway. This chain is Dysbindin (Dtnbp1), found in Rattus norvegicus (Rat).